The following is a 421-amino-acid chain: Phosphatidylinositol 5-phosphate 4-kinase type-2 gamma (421 aa).

Alanine 2 is modified (N-acetylalanine). Phosphoserine is present on serine 26. The PIPK domain occupies 43–420 (AADPLVGVFL…RFLDFITNIF (378 aa)). Residues 69–75 (VMLLPDD) are required for interaction with PIP5K1A. Serine 349 is modified (phosphoserine).

As to quaternary structure, interacts with PIP5K1A; the interaction inhibits PIP5K1A kinase activity. Post-translationally, phosphorylated, phosphorylation is induced by EGF.

The protein localises to the endoplasmic reticulum. The protein resides in the cytoplasm. It carries out the reaction a 1,2-diacyl-sn-glycero-3-phospho-(1D-myo-inositol-5-phosphate) + ATP = a 1,2-diacyl-sn-glycero-3-phospho-(1D-myo-inositol-4,5-bisphosphate) + ADP + H(+). The catalysed reaction is 1,2-dihexadecanoyl-sn-glycero-3-phospho-(1D-myo-inositol-5-phosphate) + ATP = 1,2-dihexadecanoyl-sn-glycero-3-phospho-(1D-myo-inositol-4,5-bisphosphate) + ADP + H(+). It catalyses the reaction 1,2-dihexadecanoyl-sn-glycero-3-phospho-(1D-myo-inositol-5-phosphate) + GTP = 1,2-dihexadecanoyl-sn-glycero-3-phospho-(1D-myo-inositol-4,5-bisphosphate) + GDP + H(+). Its function is as follows. Phosphatidylinositol 5-phosphate 4-kinase with low enzymatic activity. May be a GTP sensor, has higher GTP-dependent kinase activity than ATP-dependent kinase activity. PIP4Ks negatively regulate insulin signaling through a catalytic-independent mechanism. They interact with PIP5Ks and suppress PIP5K-mediated PtdIns(4,5)P2 synthesis and insulin-dependent conversion to PtdIns(3,4,5)P3. This is Phosphatidylinositol 5-phosphate 4-kinase type-2 gamma (PIP4K2C) from Pongo abelii (Sumatran orangutan).